The following is a 20-amino-acid chain: Trypsin inhibitor A chain (20 aa).

The protein belongs to the protease inhibitor I3 (leguminous Kunitz-type inhibitor) family. In terms of assembly, heterodimer of an 'A' and a 'B' chain linked by a disulfide bond.

Inhibits trypsin and alpha-chymotrypsin. This is Trypsin inhibitor A chain from Albizia julibrissin (Silk tree).